The primary structure comprises 911 residues: Androgen receptor (911 aa).

A modulating region spans residues 1–549; sequence MEVQLGLGRV…PIDYYFPPQK (549 aa). Residues 1-578 form an interaction with ZNF318 region; that stretch reads MEVQLGLGRV…GSCKVFFKRA (578 aa). Disordered regions lie at residues 35–164 and 192–225; these read QNPG…LSLL and QQQQQEAVSEGSSSGRAREASGAPTSSKDNYLGG. Residues 44-88 are compositionally biased toward low complexity; it reads AASAAPPGASLLLQQQQQQQQQQQQQQQQQQQQQQETSPRQQQQQ. Ser-81 bears the Phosphoserine; by CDK9 mark. Ser-93 is modified (phosphoserine). Residues 192-214 are compositionally biased toward low complexity; the sequence is QQQQQEAVSEGSSSGRAREASGA. Positions 215–225 are enriched in polar residues; the sequence is PTSSKDNYLGG. Tyr-222 carries the post-translational modification Phosphotyrosine; by CSK. Ser-255 is modified (phosphoserine). Tyr-266 carries the post-translational modification Phosphotyrosine; by CSK and TNK2. 4 positions are modified to phosphotyrosine; by CSK: Tyr-306, Tyr-345, Tyr-356, and Tyr-361. Tyr-362 carries the post-translational modification Phosphotyrosine; by CSK and TNK2. Residue Lys-385 forms a Glycyl lysine isopeptide (Lys-Gly) (interchain with G-Cter in SUMO) linkage. Tyr-392 bears the Phosphotyrosine; by CSK mark. Lys-512 participates in a covalent cross-link: Glycyl lysine isopeptide (Lys-Gly) (interchain with G-Cter in SUMO). Phosphotyrosine; by CSK occurs at positions 526 and 543. Positions 543–910 are interaction with LPXN; that stretch reads YYFPPQKTCL…GKVKPIYFHT (368 aa). 2 NR C4-type zinc fingers span residues 551 to 571 and 587 to 611; these read CLICGDEASGCHYGALTCGSC and CASRNDCTIDKFRRKNCPSCRLRKC. Positions 551-623 form a DNA-binding region, nuclear receptor; the sequence is CLICGDEASG…AGMTLGARKL (73 aa). Residues 563–653 are interaction with HIPK3; that stretch reads YGALTCGSCK…TEETTQKLTV (91 aa). An interaction with CCAR1 region spans residues 583 to 910; that stretch reads QKYLCASRND…GKVKPIYFHT (328 aa). The interaction with KAT7 stretch occupies residues 616 to 910; the sequence is MTLGARKLKK…GKVKPIYFHT (295 aa). Ser-642 is subject to Phosphoserine; by STK4/MST1. Residues 660–891 form the NR LBD domain; it reads ECQPIFLNVL…DFPEMMAEII (232 aa). The 17beta-hydroxy-5alpha-androstan-3-one site is built by Asn-697 and Arg-744. Glycyl lysine isopeptide (Lys-Gly) (interchain with G-Cter in ubiquitin) cross-links involve residues Lys-837 and Lys-839. Thr-869 provides a ligand contact to 17beta-hydroxy-5alpha-androstan-3-one. Tyr-907 bears the Phosphotyrosine; by CSK mark.

Belongs to the nuclear hormone receptor family. NR3 subfamily. Binds DNA as a homodimer. Part of a ternary complex containing AR, EFCAB6/DJBP and PARK7. Interacts with HIPK3 and NR0B2 in the presence of androgen. The ligand binding domain interacts with KAT7/HBO1 in the presence of dihydrotestosterone. Interacts with EFCAB6/DJBP, PQBP1, RANBP9, RBAK, SPDEF, SRA1, TGFB1I1 and RREB1. Interacts with ZMIZ1/ZIMP10 and ZMIZ2/ZMIP7 which both enhance its transactivation activity. Interacts with SLC30A9 and RAD54L2/ARIP4. Interacts with MACROD1 (via macro domain). Interacts via the ligand-binding domain with LXXLL and FXXLF motifs from NCOA1, NCOA2, NCOA3 and MAGEA11. Interacts (via nuclear receptor DNA binding domain and nuclear receptor ligand binding domain) with NCOA4. The AR N-terminal poly-Gln region binds Ran resulting in enhancement of AR-mediated transactivation. Ran-binding decreases as the poly-Gln length increases. Interacts with HIP1 (via coiled coil domain). Interacts (via ligand-binding domain) with TRIM68. Interacts with TNK2. Interacts with USP26. Interacts with RNF6. Interacts (regulated by RNF6 probably through polyubiquitination) with RNF14; regulates AR transcriptional activity. Interacts with PRMT2 and TRIM24. Interacts with RACK1. Interacts with RANBP10; this interaction enhances dihydrotestosterone-induced AR transcriptional activity. Interacts with PRPF6 in a hormone-independent way; this interaction enhances dihydrotestosterone-induced AR transcriptional activity. Interacts with STK4/MST1. Interacts with ZIPK/DAPK3. Interacts with LPXN. Interacts with MAK. Part of a complex containing AR, MAK and NCOA3. Interacts with CRY1. Interacts with CCAR1 and GATA2. Interacts with ZNF318. Interacts with BUD31. Interacts with ARID4A. Interacts with ARID4B. Interacts (via NR LBD domain) with ZBTB7A; the interaction is direct and androgen-dependent. Interacts with NCOR1. Interacts with NCOR2. Interacts with CRY2 in a ligand-dependent manner. Post-translationally, phosphorylated in prostate cancer cells in response to several growth factors including EGF. Phosphorylation is induced by c-Src kinase (CSK). Tyr-526 is one of the major phosphorylation sites and an increase in phosphorylation and Src kinase activity is associated with prostate cancer progression. Phosphorylation by TNK2 enhances the DNA-binding and transcriptional activity. Phosphorylation at Ser-81 by CDK9 regulates AR promoter selectivity and cell growth. Sumoylated on Lys-385 (major) and Lys-512. Ubiquitinated. Deubiquitinated by USP26. 'Lys-6' and 'Lys-27'-linked polyubiquitination by RNF6 modulates AR transcriptional activity and specificity. In terms of processing, palmitoylated by ZDHHC7 and ZDHHC21. Palmitoylation is required for plasma membrane targeting and for rapid intracellular signaling via ERK and AKT kinases and cAMP generation.

It is found in the nucleus. Its subcellular location is the cytoplasm. Functionally, steroid hormone receptors are ligand-activated transcription factors that regulate eukaryotic gene expression and affect cellular proliferation and differentiation in target tissues. Transcription factor activity is modulated by bound coactivator and corepressor proteins like ZBTB7A that recruits NCOR1 and NCOR2 to the androgen response elements/ARE on target genes, negatively regulating androgen receptor signaling and androgen-induced cell proliferation. Transcription activation is also down-regulated by NR0B2. Activated, but not phosphorylated, by HIPK3 and ZIPK/DAPK3. The polypeptide is Androgen receptor (AR) (Pan troglodytes (Chimpanzee)).